The sequence spans 809 residues: Leucine--tRNA ligase (809 aa).

Residues 40-50 (PYPSGRIHMGH) carry the 'HIGH' region motif. The 'KMSKS' region signature appears at 579-583 (KMSKS). Lys582 is an ATP binding site.

The protein belongs to the class-I aminoacyl-tRNA synthetase family.

It localises to the cytoplasm. It catalyses the reaction tRNA(Leu) + L-leucine + ATP = L-leucyl-tRNA(Leu) + AMP + diphosphate. The chain is Leucine--tRNA ligase from Campylobacter jejuni (strain RM1221).